The chain runs to 249 residues: Undecaprenyl-diphosphatase (249 aa).

8 helical membrane passes run 11–31, 35–55, 80–100, 101–121, 135–155, 175–195, 202–222, and 226–246; these read GLTE…TAIF, PDVG…LIFV, LVLS…FIES, VFSS…LMLL, IPYL…LPGI, AVKY…ILEL, AEQL…LYLV, and VIGG…FFVL.

Belongs to the UppP family.

It is found in the cell membrane. The enzyme catalyses di-trans,octa-cis-undecaprenyl diphosphate + H2O = di-trans,octa-cis-undecaprenyl phosphate + phosphate + H(+). In terms of biological role, catalyzes the dephosphorylation of undecaprenyl diphosphate (UPP). The polypeptide is Undecaprenyl-diphosphatase (Methanococcus maripaludis (strain C5 / ATCC BAA-1333)).